The chain runs to 27 residues: Metalloproteinase inhibitor 1 (27 aa).

The span at I1 to E12 shows a compositional bias: acidic residues. The interval I1–Q27 is disordered.

Metalloproteinase inhibitor, active on a globulinase from L.albus seeds, thermolysin and gelatinase B. The polypeptide is Metalloproteinase inhibitor 1 (Lupinus albus (White lupine)).